A 334-amino-acid chain; its full sequence is Glycerol-3-phosphate dehydrogenase [NAD(P)+] 2 (334 aa).

W16, R36, R37, and K110 together coordinate NADPH. K110 and G140 together coordinate sn-glycerol 3-phosphate. NADPH is bound at residue A144. Sn-glycerol 3-phosphate-binding residues include K195, D248, S258, R259, and N260. The active-site Proton acceptor is K195. R259 is an NADPH binding site. Positions 282 and 284 each coordinate NADPH.

It belongs to the NAD-dependent glycerol-3-phosphate dehydrogenase family.

The protein localises to the cytoplasm. It catalyses the reaction sn-glycerol 3-phosphate + NAD(+) = dihydroxyacetone phosphate + NADH + H(+). The catalysed reaction is sn-glycerol 3-phosphate + NADP(+) = dihydroxyacetone phosphate + NADPH + H(+). It functions in the pathway membrane lipid metabolism; glycerophospholipid metabolism. Its function is as follows. Catalyzes the reduction of the glycolytic intermediate dihydroxyacetone phosphate (DHAP) to sn-glycerol 3-phosphate (G3P), the key precursor for phospholipid synthesis. The protein is Glycerol-3-phosphate dehydrogenase [NAD(P)+] 2 of Mycobacterium bovis (strain ATCC BAA-935 / AF2122/97).